A 1250-amino-acid polypeptide reads, in one-letter code: DNA excision repair protein ERCC-6-like (1250 aa).

Ser14 bears the Phosphoserine mark. One copy of the TPR 1 repeat lies at 21 to 54 (YLRYVKEAKEATKNGDLEEAFKLFNLAKDIFPNE). In terms of domain architecture, Helicase ATP-binding spans 109–277 (SLYRDGRKGG…WSLFDFACQG (169 aa)). Residue 122-129 (DDMGLGKT) participates in ATP binding. Residues 228–231 (DEAH) carry the DEAH box motif. Positions 464–620 (FLMDLLKRLR…EKKNPFRYFS (157 aa)) constitute a Helicase C-terminal domain. Residues 735–768 (VFPSSTKKKCPKLNKPQPQPSPLLSTHHTQEEDI) are disordered. Ser755, Ser774, Ser807, and Ser810 each carry phosphoserine. Thr813 bears the Phosphothreonine mark. Ser820 is subject to Phosphoserine. The tract at residues 926-946 (SALQDAQASEAKLEEEPSASS) is disordered. Ser969, Ser971, Ser995, Ser1004, and Ser1028 each carry phosphoserine. Positions 1061–1092 (ASTPKNDISPPGRFFSSQIPSSVNKSMNSRRS) are disordered. The residue at position 1063 (Thr1063) is a Phosphothreonine; by PLK1. Ser1069 is modified (phosphoserine). The span at 1075 to 1087 (FSSQIPSSVNKSM) shows a compositional bias: polar residues. 2 positions are modified to phosphoserine: Ser1098 and Ser1118. Residues 1110 to 1199 (MEERLDDSSE…QDKAAEATND (90 aa)) form a disordered region. Basic and acidic residues predominate over residues 1115–1124 (DDSSEAKGPE). Positions 1125-1135 (DYPEEGVEESS) are enriched in acidic residues. Residues 1149–1173 (ETLSSENKSSWLMTSKPSALAQETS) are compositionally biased toward polar residues. Residues Ser1181 and Ser1188 each carry the phosphoserine modification. The stretch at 1200–1233 (YETLVKRGKELKECGKIQEALNCLVKALDIKSAD) is one TPR 2 repeat.

This sequence belongs to the SNF2/RAD54 helicase family. In terms of assembly, interacts with PLK1, which phosphorylates it. Both proteins are mutually dependent on each other for correct subcellular localization. Interacts (via N-terminal TPR repeat) with BEND3 (via BEN domains 1 and 3); the interaction is direct. Post-translationally, phosphorylation by PLK1 prevents the association with chromosome arms and restricts its localization to the kinetochore-centromere region.

Its subcellular location is the chromosome. It localises to the centromere. The protein resides in the kinetochore. The catalysed reaction is ATP + H2O = ADP + phosphate + H(+). In terms of biological role, DNA helicase that acts as a tension sensor that associates with catenated DNA which is stretched under tension until it is resolved during anaphase. Functions as ATP-dependent DNA translocase. Can promote Holliday junction branch migration (in vitro). The protein is DNA excision repair protein ERCC-6-like (ERCC6L) of Homo sapiens (Human).